The primary structure comprises 291 residues: Pantothenate synthetase (291 aa).

30–37 contributes to the ATP binding site; that stretch reads MGYLHAGH. The active-site Proton donor is the H37. Position 61 (Q61) interacts with (R)-pantoate. Residue Q61 participates in beta-alanine binding. An ATP-binding site is contributed by 147-150; that stretch reads GEKD. Position 153 (Q153) interacts with (R)-pantoate. ATP contacts are provided by residues V176 and 184-187; that span reads LSSR.

The protein belongs to the pantothenate synthetase family. Homodimer.

It is found in the cytoplasm. It carries out the reaction (R)-pantoate + beta-alanine + ATP = (R)-pantothenate + AMP + diphosphate + H(+). It functions in the pathway cofactor biosynthesis; (R)-pantothenate biosynthesis; (R)-pantothenate from (R)-pantoate and beta-alanine: step 1/1. Catalyzes the condensation of pantoate with beta-alanine in an ATP-dependent reaction via a pantoyl-adenylate intermediate. This is Pantothenate synthetase from Rhizobium rhizogenes (strain K84 / ATCC BAA-868) (Agrobacterium radiobacter).